Reading from the N-terminus, the 386-residue chain is Succinate--CoA ligase [ADP-forming] subunit beta (386 aa).

The 227-residue stretch at 9–235 folds into the ATP-grasp domain; that stretch reads KELFAKHDVP…REEEDPLESA (227 aa). ATP contacts are provided by residues Lys44, 51-53, Ala93, and Glu98; that span reads GRG. Residues Asn190 and Asp204 each coordinate Mg(2+). Residues Asn255 and 317 to 319 each bind substrate; that span reads GIT.

Belongs to the succinate/malate CoA ligase beta subunit family. In terms of assembly, heterotetramer of two alpha and two beta subunits. Mg(2+) is required as a cofactor.

It carries out the reaction succinate + ATP + CoA = succinyl-CoA + ADP + phosphate. The enzyme catalyses GTP + succinate + CoA = succinyl-CoA + GDP + phosphate. It functions in the pathway carbohydrate metabolism; tricarboxylic acid cycle; succinate from succinyl-CoA (ligase route): step 1/1. Its function is as follows. Succinyl-CoA synthetase functions in the citric acid cycle (TCA), coupling the hydrolysis of succinyl-CoA to the synthesis of either ATP or GTP and thus represents the only step of substrate-level phosphorylation in the TCA. The beta subunit provides nucleotide specificity of the enzyme and binds the substrate succinate, while the binding sites for coenzyme A and phosphate are found in the alpha subunit. The sequence is that of Succinate--CoA ligase [ADP-forming] subunit beta from Nocardioides sp. (strain ATCC BAA-499 / JS614).